The primary structure comprises 258 residues: L-aspartate dehydrogenase 1 (258 aa).

Residues A121 and N181 each contribute to the NAD(+) site. Residue H211 is part of the active site.

The protein belongs to the L-aspartate dehydrogenase family.

The enzyme catalyses L-aspartate + NADP(+) + H2O = oxaloacetate + NH4(+) + NADPH + H(+). The catalysed reaction is L-aspartate + NAD(+) + H2O = oxaloacetate + NH4(+) + NADH + H(+). The protein operates within cofactor biosynthesis; NAD(+) biosynthesis; iminoaspartate from L-aspartate (dehydrogenase route): step 1/1. Its function is as follows. Specifically catalyzes the NAD or NADP-dependent dehydrogenation of L-aspartate to iminoaspartate. This chain is L-aspartate dehydrogenase 1, found in Bordetella pertussis (strain Tohama I / ATCC BAA-589 / NCTC 13251).